A 1107-amino-acid polypeptide reads, in one-letter code: Enolase-phosphatase E1 (1107 aa).

2 residues coordinate Mg(2+): Asp19 and Glu21. Substrate contacts are provided by residues 152 to 153 (SS) and Lys186. Mg(2+) is bound at residue Asp211. The tract at residues 258–1107 (SVKSTETENG…SATPSVETES (850 aa)) is disordered. The span at 260 to 289 (KSTETENGAEKETVTESTEKVADESEKETE) shows a compositional bias: basic and acidic residues. Over residues 291–306 (ETAAAETENGAEAENG) the composition is skewed to low complexity. Positions 366-376 (DAMDVDAEMTD) are enriched in acidic residues. Basic and acidic residues-rich tracts occupy residues 393–427 (VTEK…DTKQ) and 435–462 (GEDK…KEEE). The segment covering 475-485 (DKMDVDEEDSA) has biased composition (acidic residues). 6 stretches are compositionally biased toward basic and acidic residues: residues 486-512 (VIEK…KEEN), 534-548 (DETK…KEES), 572-586 (TVEK…SKSE), 593-604 (TSEKKVEDKSAN), 610-686 (KEPK…EVKA), and 693-776 (DESK…KSVD). Positions 794 to 803 (EETSATTEAQ) are enriched in low complexity. Composition is skewed to basic and acidic residues over residues 804-838 (ATKE…DAKS) and 849-908 (KEMK…ETKG). The span at 909–919 (VEATTAGPVEE) shows a compositional bias: low complexity. Positions 920 to 935 (VAVEATEEDVAMEAES) are enriched in acidic residues. Composition is skewed to basic and acidic residues over residues 937–957 (DAVK…KLDS), 1001–1028 (DEVK…EADS), and 1035–1047 (NHDE…KEND). Residues 1048-1083 (TSASNIEEASSATTTTTNGTSTESDSSSTTPSSETV) are compositionally biased toward low complexity.

It belongs to the HAD-like hydrolase superfamily. MasA/MtnC family. As to quaternary structure, monomer. The cofactor is Mg(2+).

The protein localises to the cytoplasm. It localises to the nucleus. It carries out the reaction 5-methylsulfanyl-2,3-dioxopentyl phosphate + H2O = 1,2-dihydroxy-5-(methylsulfanyl)pent-1-en-3-one + phosphate. The protein operates within amino-acid biosynthesis; L-methionine biosynthesis via salvage pathway; L-methionine from S-methyl-5-thio-alpha-D-ribose 1-phosphate: step 3/6. Its pathway is amino-acid biosynthesis; L-methionine biosynthesis via salvage pathway; L-methionine from S-methyl-5-thio-alpha-D-ribose 1-phosphate: step 4/6. In terms of biological role, bifunctional enzyme that catalyzes the enolization of 2,3-diketo-5-methylthiopentyl-1-phosphate (DK-MTP-1-P) into the intermediate 2-hydroxy-3-keto-5-methylthiopentenyl-1-phosphate (HK-MTPenyl-1-P), which is then dephosphorylated to form the acireductone 1,2-dihydroxy-3-keto-5-methylthiopentene (DHK-MTPene). This chain is Enolase-phosphatase E1, found in Aedes aegypti (Yellowfever mosquito).